Here is a 156-residue protein sequence, read N- to C-terminus: Ribosomal RNA large subunit methyltransferase H (156 aa).

S-adenosyl-L-methionine is bound by residues Leu73, Gly104, and 123–128 (LSALTL).

It belongs to the RNA methyltransferase RlmH family. Homodimer.

The protein resides in the cytoplasm. It carries out the reaction pseudouridine(1915) in 23S rRNA + S-adenosyl-L-methionine = N(3)-methylpseudouridine(1915) in 23S rRNA + S-adenosyl-L-homocysteine + H(+). In terms of biological role, specifically methylates the pseudouridine at position 1915 (m3Psi1915) in 23S rRNA. This chain is Ribosomal RNA large subunit methyltransferase H, found in Shewanella frigidimarina (strain NCIMB 400).